A 44-amino-acid polypeptide reads, in one-letter code: Small ribosomal subunit protein eS31 (44 aa).

The Zn(2+) site is built by Cys18, Cys21, Cys35, and Cys38. The C4-type zinc finger occupies 18–38 (CPRCGDTFLAAHDDRQVCGRC).

It belongs to the eukaryotic ribosomal protein eS31 family. As to quaternary structure, part of the 30S ribosomal subunit. Zn(2+) serves as cofactor.

This is Small ribosomal subunit protein eS31 from Halobacterium salinarum (strain ATCC 29341 / DSM 671 / R1).